Here is a 208-residue protein sequence, read N- to C-terminus: Guanylate kinase (208 aa).

Residues 21 to 201 (GRVVVLSGPS…ACAELVSLLV (181 aa)) enclose the Guanylate kinase-like domain. 28–35 (GPSAVGKS) contacts ATP.

This sequence belongs to the guanylate kinase family.

It localises to the cytoplasm. It catalyses the reaction GMP + ATP = GDP + ADP. Its function is as follows. Essential for recycling GMP and indirectly, cGMP. In Mycobacterium bovis (strain ATCC BAA-935 / AF2122/97), this protein is Guanylate kinase (gmk).